A 500-amino-acid polypeptide reads, in one-letter code: Cryptochrome DASH (500 aa).

Positions lysine 4–leucine 138 constitute a Photolyase/cryptochrome alpha/beta domain.

Belongs to the DNA photolyase class-1 family. FAD serves as cofactor. It depends on (6R)-5,10-methylene-5,6,7,8-tetrahydrofolate as a cofactor.

In terms of biological role, may have a photoreceptor function. Binds DNA; probably functions as a transcriptional repressor. This Gloeobacter violaceus (strain ATCC 29082 / PCC 7421) protein is Cryptochrome DASH (cry).